A 65-amino-acid chain; its full sequence is Large ribosomal subunit protein bL35 (65 aa).

It belongs to the bacterial ribosomal protein bL35 family.

In Psychrobacter arcticus (strain DSM 17307 / VKM B-2377 / 273-4), this protein is Large ribosomal subunit protein bL35.